The primary structure comprises 122 residues: Large ribosomal subunit protein uL14 (122 aa).

It belongs to the universal ribosomal protein uL14 family. Part of the 50S ribosomal subunit. Forms a cluster with proteins L3 and L19. In the 70S ribosome, L14 and L19 interact and together make contacts with the 16S rRNA in bridges B5 and B8.

Its function is as follows. Binds to 23S rRNA. Forms part of two intersubunit bridges in the 70S ribosome. The chain is Large ribosomal subunit protein uL14 from Granulibacter bethesdensis (strain ATCC BAA-1260 / CGDNIH1).